Consider the following 432-residue polypeptide: 3-phosphoshikimate 1-carboxyvinyltransferase (432 aa).

3-phosphoshikimate contacts are provided by Lys-22, Ser-23, and Arg-27. Phosphoenolpyruvate is bound at residue Lys-22. The phosphoenolpyruvate site is built by Gly-96 and Arg-127. The 3-phosphoshikimate site is built by Ser-173, Ser-174, Gln-175, Ser-201, Asp-317, Asn-340, and Lys-344. Position 175 (Gln-175) interacts with phosphoenolpyruvate. Asp-317 acts as the Proton acceptor in catalysis. Residues Arg-348, Arg-392, and Lys-417 each coordinate phosphoenolpyruvate.

Belongs to the EPSP synthase family. Monomer.

It localises to the cytoplasm. It catalyses the reaction 3-phosphoshikimate + phosphoenolpyruvate = 5-O-(1-carboxyvinyl)-3-phosphoshikimate + phosphate. It participates in metabolic intermediate biosynthesis; chorismate biosynthesis; chorismate from D-erythrose 4-phosphate and phosphoenolpyruvate: step 6/7. Its function is as follows. Catalyzes the transfer of the enolpyruvyl moiety of phosphoenolpyruvate (PEP) to the 5-hydroxyl of shikimate-3-phosphate (S3P) to produce enolpyruvyl shikimate-3-phosphate and inorganic phosphate. In Mannheimia haemolytica (Pasteurella haemolytica), this protein is 3-phosphoshikimate 1-carboxyvinyltransferase.